Here is a 121-residue protein sequence, read N- to C-terminus: Small ribosomal subunit protein uS13 (121 aa).

Residues 94 to 121 form a disordered region; it reads GLPMRGQRTRTNARTRKGPRKAAAALKK.

The protein belongs to the universal ribosomal protein uS13 family. As to quaternary structure, part of the 30S ribosomal subunit. Forms a loose heterodimer with protein S19. Forms two bridges to the 50S subunit in the 70S ribosome.

Its function is as follows. Located at the top of the head of the 30S subunit, it contacts several helices of the 16S rRNA. In the 70S ribosome it contacts the 23S rRNA (bridge B1a) and protein L5 of the 50S subunit (bridge B1b), connecting the 2 subunits; these bridges are implicated in subunit movement. Contacts the tRNAs in the A and P-sites. The sequence is that of Small ribosomal subunit protein uS13 from Polaromonas sp. (strain JS666 / ATCC BAA-500).